The primary structure comprises 316 residues: tRNA pseudouridine synthase B (316 aa).

Residue Asp-47 is the Nucleophile of the active site.

Belongs to the pseudouridine synthase TruB family. Type 1 subfamily.

It carries out the reaction uridine(55) in tRNA = pseudouridine(55) in tRNA. Responsible for synthesis of pseudouridine from uracil-55 in the psi GC loop of transfer RNAs. In Aliivibrio fischeri (strain ATCC 700601 / ES114) (Vibrio fischeri), this protein is tRNA pseudouridine synthase B.